The primary structure comprises 254 residues: 5'-nucleotidase SurE (254 aa).

A divalent metal cation is bound by residues aspartate 8, aspartate 9, serine 40, and asparagine 93.

This sequence belongs to the SurE nucleotidase family. It depends on a divalent metal cation as a cofactor.

The protein localises to the cytoplasm. It carries out the reaction a ribonucleoside 5'-phosphate + H2O = a ribonucleoside + phosphate. Its function is as follows. Nucleotidase that shows phosphatase activity on nucleoside 5'-monophosphates. In Methylobacterium radiotolerans (strain ATCC 27329 / DSM 1819 / JCM 2831 / NBRC 15690 / NCIMB 10815 / 0-1), this protein is 5'-nucleotidase SurE.